Reading from the N-terminus, the 202-residue chain is Small ribosomal subunit protein uS4c (202 aa).

In terms of domain architecture, S4 RNA-binding spans 90–152 (MRLDNLIFRL…AASKSLVNTY (63 aa)).

Belongs to the universal ribosomal protein uS4 family. As to quaternary structure, part of the 30S ribosomal subunit. Contacts protein S5. The interaction surface between S4 and S5 is involved in control of translational fidelity.

It is found in the plastid. The protein localises to the chloroplast. One of the primary rRNA binding proteins, it binds directly to 16S rRNA where it nucleates assembly of the body of the 30S subunit. Its function is as follows. With S5 and S12 plays an important role in translational accuracy. The protein is Small ribosomal subunit protein uS4c (rps4) of Emiliania huxleyi (Coccolithophore).